A 324-amino-acid polypeptide reads, in one-letter code: IDS-like terpene synthase 3 (324 aa).

Residues Asp77 and Asp81 each coordinate Mg(2+).

The protein belongs to the FPP/GGPP synthase family. It depends on Mg(2+) as a cofactor.

It carries out the reaction (2E)-geranyl diphosphate + H2O = linalool + diphosphate. The catalysed reaction is (2E,6E)-farnesyl diphosphate + H2O = (6E)-nerolidol + diphosphate. In terms of biological role, terpene synthase that shows monoterpene synthase activity and produces linalool, using geranyl diphosphate (GPP) as substrate. Also shows sesquiterpene synthase activity as it is able to convert farnesyl diphosphate (FPP) into (E)-nerolidol. This chain is IDS-like terpene synthase 3, found in Melampsora lini (Rust fungus).